The chain runs to 632 residues: Asparagine synthetase [glutamine-hydrolyzing] 1 (632 aa).

Residue Cys2 is the For GATase activity of the active site. Residues 2–214 enclose the Glutamine amidotransferase type-2 domain; the sequence is CGFVGVFNKH…PGSQFTIRPD (213 aa). L-glutamine-binding positions include 52–56, 77–79, and Asp102; these read RLSII and NGE. ATP-binding positions include Val288 and 361 to 362; that span reads SG.

The protein belongs to the asparagine synthetase family.

It catalyses the reaction L-aspartate + L-glutamine + ATP + H2O = L-asparagine + L-glutamate + AMP + diphosphate + H(+). It participates in amino-acid biosynthesis; L-asparagine biosynthesis; L-asparagine from L-aspartate (L-Gln route): step 1/1. Functionally, main asparagine synthetase in vegetative cells. This chain is Asparagine synthetase [glutamine-hydrolyzing] 1 (asnB), found in Bacillus subtilis (strain 168).